Here is a 479-residue protein sequence, read N- to C-terminus: ATP synthase subunit beta (479 aa).

ATP is bound at residue 168-175 (GGAGVGKT).

The protein belongs to the ATPase alpha/beta chains family. F-type ATPases have 2 components, CF(1) - the catalytic core - and CF(0) - the membrane proton channel. CF(1) has five subunits: alpha(3), beta(3), gamma(1), delta(1), epsilon(1). CF(0) has three main subunits: a(1), b(2) and c(9-12). The alpha and beta chains form an alternating ring which encloses part of the gamma chain. CF(1) is attached to CF(0) by a central stalk formed by the gamma and epsilon chains, while a peripheral stalk is formed by the delta and b chains.

It localises to the cell membrane. The catalysed reaction is ATP + H2O + 4 H(+)(in) = ADP + phosphate + 5 H(+)(out). Its function is as follows. Produces ATP from ADP in the presence of a proton gradient across the membrane. The catalytic sites are hosted primarily by the beta subunits. This chain is ATP synthase subunit beta, found in Frankia casuarinae (strain DSM 45818 / CECT 9043 / HFP020203 / CcI3).